The following is a 200-amino-acid chain: MIKLIVGLGNPGAEYTATRHNAGFWLVDQLAREAGTTLRDERRFHGFYAKARLHGEEVHLLEPQTYMNRSGQSVVAVAQFFKILPDEILVAHDELDLPPGSIKLKLGGGSGGHNGLKDITAHLSSQQYWRLRIGIGHPRDLIPESARAGAKPDVANYVLKPPRREEQDVIDASIERGLAVMPQIIKGELERAMMQLHRNP.

Residue Tyr-15 participates in tRNA binding. Residue His-20 is the Proton acceptor of the active site. TRNA is bound by residues Tyr-66, Asn-68, and Asn-114.

The protein belongs to the PTH family. As to quaternary structure, monomer.

The protein localises to the cytoplasm. It catalyses the reaction an N-acyl-L-alpha-aminoacyl-tRNA + H2O = an N-acyl-L-amino acid + a tRNA + H(+). Hydrolyzes ribosome-free peptidyl-tRNAs (with 1 or more amino acids incorporated), which drop off the ribosome during protein synthesis, or as a result of ribosome stalling. Functionally, catalyzes the release of premature peptidyl moieties from peptidyl-tRNA molecules trapped in stalled 50S ribosomal subunits, and thus maintains levels of free tRNAs and 50S ribosomes. In Paraburkholderia phytofirmans (strain DSM 17436 / LMG 22146 / PsJN) (Burkholderia phytofirmans), this protein is Peptidyl-tRNA hydrolase.